Here is a 227-residue protein sequence, read N- to C-terminus: Cytidylate kinase (227 aa).

12 to 20 (GPSGAGKGT) is a binding site for ATP.

The protein belongs to the cytidylate kinase family. Type 1 subfamily.

It localises to the cytoplasm. It catalyses the reaction CMP + ATP = CDP + ADP. The catalysed reaction is dCMP + ATP = dCDP + ADP. This Enterobacter sp. (strain 638) protein is Cytidylate kinase.